Reading from the N-terminus, the 443-residue chain is Tol-Pal system protein TolB (443 aa).

Positions 1–33 are cleaved as a signal peptide; sequence MKIGIINTKIRTVFSAFACMIAASLVCTMPARA.

It belongs to the TolB family. As to quaternary structure, the Tol-Pal system is composed of five core proteins: the inner membrane proteins TolA, TolQ and TolR, the periplasmic protein TolB and the outer membrane protein Pal. They form a network linking the inner and outer membranes and the peptidoglycan layer.

It is found in the periplasm. Part of the Tol-Pal system, which plays a role in outer membrane invagination during cell division and is important for maintaining outer membrane integrity. In Brucella abortus (strain S19), this protein is Tol-Pal system protein TolB.